Here is a 308-residue protein sequence, read N- to C-terminus: Putative glutamine amidotransferase Rv2859c (308 aa).

Residues 1-62 (MDLSASRSDG…ASPRLRSPLG (62 aa)) are disordered. 3 stretches are compositionally biased toward low complexity: residues 13-24 (PLRPASPRLRSP), 31-42 (PLRPASPRLRSP), and 49-61 (PLRPASPRLRSPL). One can recognise a Glutamine amidotransferase type-1 domain in the interval 78-301 (RTGVWDIPAG…VDAASGYAGR (224 aa)). Cys177 serves as the catalytic Nucleophile. Active-site residues include His277 and Glu279. Lys289 participates in a covalent cross-link: Isoglutamyl lysine isopeptide (Lys-Gln) (interchain with Q-Cter in protein Pup).

In Mycobacterium tuberculosis (strain ATCC 25618 / H37Rv), this protein is Putative glutamine amidotransferase Rv2859c.